We begin with the raw amino-acid sequence, 767 residues long: ATPase family gene 2 protein homolog B (767 aa).

Residue M1 is modified to N-acetylmethionine. Residues 241 to 248 (GPPGVGKT) and 507 to 514 (GPPGCAKT) contribute to the ATP site.

This sequence belongs to the AAA ATPase family. AFG2 subfamily. As to quaternary structure, part of the 55LCC heterohexameric ATPase complex composed at least of AIRIM, AFG2A, AFG2B and CINP. Associates with pre-60S ribosomal particles.

The protein resides in the cytoplasm. Its subcellular location is the cytoskeleton. It localises to the spindle. The protein localises to the nucleus. The catalysed reaction is ATP + H2O = ADP + phosphate + H(+). Its activity is regulated as follows. In the context of 55LCC heterohexameric ATPase complex, the ATPase activity is stimulated by DNA binding and inhibited in presence of RNA. Functionally, ATP-dependent chaperone part of the 55LCC heterohexameric ATPase complex which is chromatin-associated and promotes replisome proteostasis to maintain replication fork progression and genome stability. Required for replication fork progression, sister chromatid cohesion, and chromosome stability. The ATPase activity is specifically enhanced by replication fork DNA and is coupled to cysteine protease-dependent cleavage of replisome substrates in response to replication fork damage. Uses ATPase activity to process replisome substrates in S-phase, facilitating their proteolytic turnover from chromatin to ensure DNA replication and mitotic fidelity. Plays an essential role in the cytoplasmic maturation steps of pre-60S ribosomal particles by promoting the release of shuttling protein RSL24D1/RLP24 from the pre-ribosomal particles. This is ATPase family gene 2 protein homolog B (AFG2B) from Bos taurus (Bovine).